The primary structure comprises 260 residues: Adenosylcobinamide-GDP ribazoletransferase (260 aa).

6 helical membrane-spanning segments follow: residues 43–63, 64–84, 117–137, 143–163, 197–217, and 237–257; these read LVGT…QFIF, PASV…GGFH, GSLA…ELAL, VAGG…SIIF, VICL…TLFV, and TLGA…LLLW.

It belongs to the CobS family. Requires Mg(2+) as cofactor.

Its subcellular location is the cell inner membrane. The enzyme catalyses alpha-ribazole + adenosylcob(III)inamide-GDP = adenosylcob(III)alamin + GMP + H(+). It carries out the reaction alpha-ribazole 5'-phosphate + adenosylcob(III)inamide-GDP = adenosylcob(III)alamin 5'-phosphate + GMP + H(+). Its pathway is cofactor biosynthesis; adenosylcobalamin biosynthesis; adenosylcobalamin from cob(II)yrinate a,c-diamide: step 7/7. Its function is as follows. Joins adenosylcobinamide-GDP and alpha-ribazole to generate adenosylcobalamin (Ado-cobalamin). Also synthesizes adenosylcobalamin 5'-phosphate from adenosylcobinamide-GDP and alpha-ribazole 5'-phosphate. The polypeptide is Adenosylcobinamide-GDP ribazoletransferase (Shewanella amazonensis (strain ATCC BAA-1098 / SB2B)).